We begin with the raw amino-acid sequence, 2517 residues long: Cullin-9 (2517 aa).

Residue Lys-87 forms a Glycyl lysine isopeptide (Lys-Gly) (interchain with G-Cter in ubiquitin) linkage. A compositionally biased stretch (polar residues) spans 276-288 (SPELGAGDQSSPC). The disordered stretch occupies residues 276–296 (SPELGAGDQSSPCATREKSRG). A CPH domain is found at 366–439 (RSEFSSRSGY…HWHMLEILGP (74 aa)). A compositionally biased stretch (low complexity) spans 576-589 (SNEPSSSSTSRNHS). Positions 576-639 (SNEPSSSSTS…TETPMAQSDS (64 aa)) are disordered. The span at 593–609 (DPEEESKSEASFSEEET) shows a compositional bias: acidic residues. The segment covering 610–630 (ESLKAKAEAPKTEAEPTKTRT) has biased composition (basic and acidic residues). Residue Ser-976 is modified to Phosphoserine. The DOC domain maps to 1143 to 1322 (PINIPFFDVF…RTCLFYTIRA (180 aa)). Position 1363–1370 (1363–1370 (AAQALGKT)) interacts with ATP. 2 disordered regions span residues 1432–1466 (VEPP…VLPS) and 1664–1685 (DEEE…AEKE). The segment covering 1433 to 1443 (EPPPGPSPEPS) has biased composition (pro residues). Ser-1457 is modified (phosphoserine). A coiled-coil region spans residues 1649–1691 (LFQLQRLDKLFLEQEDEEEKRLEEEEEEEEEEEAEKELFIEDP). Positions 1664 to 1683 (DEEEKRLEEEEEEEEEEEAE) are enriched in acidic residues. Lys-1881 is covalently cross-linked (Glycyl lysine isopeptide (Lys-Gly) (interchain with G-Cter in NEDD8)). Positions 2066-2283 (RPDHCPVCVS…KDYYNCSAMV (218 aa)) are TRIAD supradomain. Residues Cys-2070, Cys-2073, Cys-2088, His-2090, Cys-2093, Cys-2096, Cys-2115, Cys-2120, Cys-2160, Cys-2166, Cys-2181, Cys-2184, Cys-2189, Cys-2192, His-2198, Cys-2203, Cys-2236, and Cys-2239 each contribute to the Zn(2+) site. The RING-type 1 zinc-finger motif lies at 2070-2120 (CPVCVSPLGCDDDLPSLCCMHYCCKSCWNEYLTTRIEQNLVLNCTCPIADC). An IBR-type zinc finger spans residues 2140–2203 (SKYEKALLRG…FPEAHYPASC (64 aa)). The RING-type 2; atypical zinc finger occupies 2236-2265 (CPSCQAPIEKNEGCLHMTCAKCNHGFCWRC). Cys-2249 is a catalytic residue. 6 residues coordinate Zn(2+): Cys-2254, Cys-2257, Cys-2262, Cys-2265, His-2273, and Cys-2279. Positions 2365 to 2385 (VEQQTENLELHTNALQILLEE) form a coiled coil. Ser-2436 is subject to Phosphoserine. The interval 2442 to 2517 (WEAKGPNMPG…EEEDEDEAYD (76 aa)) is disordered. Acidic residues-rich tracts occupy residues 2461-2499 (EAEE…ENLD) and 2506-2517 (GDEEEDEDEAYD).

It belongs to the cullin family. Component of the Cul9-RING complex consisting of CUL9 and RBX1; the CUL9-RBX1 complex is a heterododecamer composed of six CUL9 and six RBX1 protomers. Interacts (via C-terminal TRIAD/RBR supradomain) with E2 ubiquitin-conjugating enzyme UBE2L3. Interacts with CUL7; the interaction with the CUL7 component of the 3M complex leads to inhibition of CUL9 activity. The CUL7-CUL9 heterodimer seems to interact specifically with TP53, likely via the CPH domain. Forms a complex with p53/TP53 in the cytoplasm of unstressed cells. Interacts with UBCH7 and UBCH8. Post-translationally, autoubiquitinated by the CUL9-RBX1 complex at Lys-87. In terms of processing, neddylated. Neddylation is mediated by E1 enzyme UBA3-NAE1 complex and E2 enzyme UBE2F. Structural rearrangment of the C-terminal TRIAD/RBR supradomain may play a role in neddylation and deneddylation. In terms of tissue distribution, ubiquitously expressed in all tissues with highest expression in testis brain and kidney.

The protein resides in the cytoplasm. Its function is as follows. Core component of a Cul9-RING ubiquitin-protein ligase complex composed of CUL9 and RBX1. The CUL9-RBX1 complex mediates ubiquitination and subsequent degradation of BIRC5 and is required to maintain microtubule dynamics and genome integrity. Acts downstream of the 3M complex, which inhibits the ubiquitination of BIRC5. The CUL9-RBX1 complex also mediates mono-ubiquitination of p53/TP53. Acts as a cytoplasmic anchor protein in p53/TP53-associated protein complex. Regulates the subcellular localization of p53/TP53 and its subsequent function. Ubiquitinates apurinic/apyrimidinic endodeoxyribonuclease APEX2. Ubiquitination by the CUL9-RBX1 complex is predominantly mediated by E2 ubiquitin-conjugating enzymes UBE2L3 and UBE2D2. This Homo sapiens (Human) protein is Cullin-9 (CUL9).